The primary structure comprises 503 residues: ATP synthase subunit alpha (503 aa).

Residue 169–176 participates in ATP binding; sequence GDRSTGKT.

The protein belongs to the ATPase alpha/beta chains family. As to quaternary structure, F-type ATPases have 2 components, CF(1) - the catalytic core - and CF(0) - the membrane proton channel. CF(1) has five subunits: alpha(3), beta(3), gamma(1), delta(1), epsilon(1). CF(0) has three main subunits: a(1), b(2) and c(9-12). The alpha and beta chains form an alternating ring which encloses part of the gamma chain. CF(1) is attached to CF(0) by a central stalk formed by the gamma and epsilon chains, while a peripheral stalk is formed by the delta and b chains.

It is found in the cell membrane. The enzyme catalyses ATP + H2O + 4 H(+)(in) = ADP + phosphate + 5 H(+)(out). In terms of biological role, produces ATP from ADP in the presence of a proton gradient across the membrane. The alpha chain is a regulatory subunit. In Dehalococcoides mccartyi (strain ATCC BAA-2266 / KCTC 15142 / 195) (Dehalococcoides ethenogenes (strain 195)), this protein is ATP synthase subunit alpha.